Here is a 257-residue protein sequence, read N- to C-terminus: MLNIIGVGLRGTGSITFDEFDALRTSDFVYADMYTSIGQPGLIRKISAMIDRDILPLTRDEIENGSILPQAASKNVSLIVVGDPLMATTHNELRYEAMNQGIGVRIFENASILNAAIGKAGLMVYKVAPPVSLPRISEKFFPLSVIDKIKRNADLGLHTPVLIDLEDQENIPLHDALASLLEMERRREYSGIIREICVLSRISFPDEKILFGRIEDMMQQEVNSPYMMFILSKLDDNERRFLSLFSESVSKVSDARS.

S-adenosyl-L-methionine-binding positions include leucine 9, aspartate 83, methionine 86, 111-112 (SI), and isoleucine 163.

This sequence belongs to the diphthine synthase family. Homodimer.

It carries out the reaction 2-[(3S)-amino-3-carboxypropyl]-L-histidyl-[translation elongation factor 2] + 3 S-adenosyl-L-methionine = diphthine-[translation elongation factor 2] + 3 S-adenosyl-L-homocysteine + 3 H(+). It functions in the pathway protein modification; peptidyl-diphthamide biosynthesis. S-adenosyl-L-methionine-dependent methyltransferase that catalyzes the trimethylation of the amino group of the modified target histidine residue in translation elongation factor 2 (EF-2), to form an intermediate called diphthine. The three successive methylation reactions represent the second step of diphthamide biosynthesis. This Thermoplasma acidophilum (strain ATCC 25905 / DSM 1728 / JCM 9062 / NBRC 15155 / AMRC-C165) protein is Diphthine synthase.